Reading from the N-terminus, the 169-residue chain is Deoxyuridine 5'-triphosphate nucleotidohydrolase (169 aa).

The segment covering 1-10 (MAENQINSPE) has biased composition (polar residues). A disordered region spans residues 1–25 (MAENQINSPEITEPSPKVQKLDHPE). Residues 91–93 (RSG), 105–108 (GVID), glycine 116, arginine 159, and 164–165 (FG) each bind substrate.

This sequence belongs to the dUTPase family. In terms of assembly, homodimer. The cofactor is Mg(2+). Vegetative and floral merismatic cells and provascular and vascular merismatic derivatives.

The catalysed reaction is dUTP + H2O = dUMP + diphosphate + H(+). It participates in pyrimidine metabolism; dUMP biosynthesis; dUMP from dCTP (dUTP route): step 2/2. Its function is as follows. This enzyme is involved in nucleotide metabolism: it produces dUMP, the immediate precursor of thymidine nucleotides and it decreases the intracellular concentration of dUTP so that uracil cannot be incorporated into DNA. It may have as well a metabolic role in merismatic cells. The chain is Deoxyuridine 5'-triphosphate nucleotidohydrolase from Solanum lycopersicum (Tomato).